The primary structure comprises 452 residues: 1-aminocyclopropane-1-carboxylate synthase 3 (452 aa).

N6-(pyridoxal phosphate)lysine is present on Lys-283.

The protein belongs to the class-I pyridoxal-phosphate-dependent aminotransferase family. The cofactor is pyridoxal 5'-phosphate. As to expression, expressed in leaves. Expressed in roots and leaf blades. Expressed at low levels in leaf sheaths and shoot bases.

It carries out the reaction S-adenosyl-L-methionine = 1-aminocyclopropane-1-carboxylate + S-methyl-5'-thioadenosine + H(+). It participates in alkene biosynthesis; ethylene biosynthesis via S-adenosyl-L-methionine; ethylene from S-adenosyl-L-methionine: step 1/2. Functionally, catalyzes the formation of 1-aminocyclopropane-1-carboxylate, a direct precursor of ethylene in higher plants. The polypeptide is 1-aminocyclopropane-1-carboxylate synthase 3 (Oryza sativa subsp. japonica (Rice)).